A 183-amino-acid chain; its full sequence is Dual-action ribosomal maturation protein DarP (183 aa).

The protein belongs to the DarP family.

It localises to the cytoplasm. Its function is as follows. Member of a network of 50S ribosomal subunit biogenesis factors which assembles along the 30S-50S interface, preventing incorrect 23S rRNA structures from forming. Promotes peptidyl transferase center (PTC) maturation. This Shigella flexneri serotype 5b (strain 8401) protein is Dual-action ribosomal maturation protein DarP.